The primary structure comprises 513 residues: 2-isopropylmalate synthase (513 aa).

The 264-residue stretch at 5–268 (LIIFDTTLRD…DIGVDTTQIV (264 aa)) folds into the Pyruvate carboxyltransferase domain. Positions 14, 202, 204, and 239 each coordinate Mn(2+). A regulatory domain region spans residues 394–513 (RFISLSQRSE…KAVQKINPQI (120 aa)).

Belongs to the alpha-IPM synthase/homocitrate synthase family. LeuA type 1 subfamily. In terms of assembly, homodimer. Mn(2+) serves as cofactor.

It is found in the cytoplasm. The catalysed reaction is 3-methyl-2-oxobutanoate + acetyl-CoA + H2O = (2S)-2-isopropylmalate + CoA + H(+). The protein operates within amino-acid biosynthesis; L-leucine biosynthesis; L-leucine from 3-methyl-2-oxobutanoate: step 1/4. Functionally, catalyzes the condensation of the acetyl group of acetyl-CoA with 3-methyl-2-oxobutanoate (2-ketoisovalerate) to form 3-carboxy-3-hydroxy-4-methylpentanoate (2-isopropylmalate). This is 2-isopropylmalate synthase from Cupriavidus necator (strain ATCC 17699 / DSM 428 / KCTC 22496 / NCIMB 10442 / H16 / Stanier 337) (Ralstonia eutropha).